Consider the following 187-residue polypeptide: Dihydrofolate reductase (187 aa).

The 182-residue stretch at 4-185 (PLNCIVAVSQ…IKYKFEVYEK (182 aa)) folds into the DHFR domain. Residues alanine 10 and 16–22 (GIGKNGD) each bind NADP(+). Substrate is bound at residue 31-36 (EFKYFQ). Lysine 33 carries the post-translational modification N6-acetyllysine; alternate. Residue lysine 33 is modified to N6-succinyllysine; alternate. 55-57 (RKT) contacts NADP(+). The substrate site is built by asparagine 65 and arginine 71. Residues 77 to 79 (SRE) and 117 to 124 (GGSSVYQE) contribute to the NADP(+) site.

The protein belongs to the dihydrofolate reductase family. As to quaternary structure, homodimer.

The protein resides in the mitochondrion. It localises to the cytoplasm. The catalysed reaction is (6S)-5,6,7,8-tetrahydrofolate + NADP(+) = 7,8-dihydrofolate + NADPH + H(+). It participates in cofactor biosynthesis; tetrahydrofolate biosynthesis; 5,6,7,8-tetrahydrofolate from 7,8-dihydrofolate: step 1/1. Functionally, key enzyme in folate metabolism. Contributes to the de novo mitochondrial thymidylate biosynthesis pathway. Catalyzes an essential reaction for de novo glycine and purine synthesis, and for DNA precursor synthesis. Binds its own mRNA. The chain is Dihydrofolate reductase (Dhfr) from Mus musculus (Mouse).